The sequence spans 2109 residues: General transcription factor 3C polypeptide 1 (2109 aa).

Positions 467–521 are disordered; sequence LPEGEDTFLSESDSEEERSSSKRRGRGSQKDTRASANLRPKTQPHHSTPTKGGWK. The span at 469–482 shows a compositional bias: acidic residues; that stretch reads EGEDTFLSESDSEE. A Glycyl lysine isopeptide (Lys-Gly) (interchain with G-Cter in SUMO2) cross-link involves residue Lys529. The interval 586 to 609 is disordered; the sequence is MENPKESSSSLKTGRHSSGQDKPH. A Phosphoserine modification is found at Ser667. Residues 718–727 are compositionally biased toward polar residues; it reads STANRVKTSQ. The interval 718 to 775 is disordered; the sequence is STANRVKTSQPPVPQGEAEEDSQGKEGPSGSGDSQLSASSRSESGRMKKSDNKMGITP. Position 739 is a phosphoserine (Ser739). Residues 748 to 759 are compositionally biased toward low complexity; that stretch reads SGDSQLSASSRS. Basic and acidic residues predominate over residues 760–769; that stretch reads ESGRMKKSDN. Glycyl lysine isopeptide (Lys-Gly) (interchain with G-Cter in SUMO2) cross-links involve residues Lys770 and Lys833. 2 disordered regions span residues 836 to 857 and 1059 to 1082; these read SGRA…SEAP and RKNS…ESAM. Phosphoserine occurs at positions 1062 and 1068. Positions 1073-1082 are enriched in basic and acidic residues; sequence SLQKEQESAM. Lys1142 is covalently cross-linked (Glycyl lysine isopeptide (Lys-Gly) (interchain with G-Cter in SUMO2)). The tract at residues 1202-1241 is disordered; that stretch reads SLDRNRRVRGGKSQKRKRLKKDPGKKIKRKKKGEFPGEKS. Residues 1207–1221 show a composition bias toward basic residues; that stretch reads RRVRGGKSQKRKRLK. Residues Ser1253 and Ser1611 each carry the phosphoserine modification. Positions 1608–1631 are disordered; sequence KDGSLEDDEDEEDDLDEGVGGKRR. A compositionally biased stretch (acidic residues) spans 1612–1624; it reads LEDDEDEEDDLDE. Residues Ser1632 and Ser1653 each carry the phosphoserine modification. A compositionally biased stretch (basic and acidic residues) spans 1823–1833; the sequence is EDADIQREDPQ. A disordered region spans residues 1823 to 1961; that stretch reads EDADIQREDP…GSEDPRGFTE (139 aa). Low complexity predominate over residues 1838–1848; it reads EGSSSEDSPPE. 5 positions are modified to phosphoserine: Ser1856, Ser1865, Ser1868, Ser1896, and Ser1911. Over residues 1916 to 1926 the composition is skewed to low complexity; that stretch reads LEDTAAAGAAQ. Positions 1937 to 1947 are enriched in polar residues; sequence SPGQEQLSGQA. Residue Ser1969 is modified to Phosphoserine.

Belongs to the TFIIIC subunit 1 family. As to quaternary structure, part of the TFIIIC subcomplex TFIIIC2, consisting of six subunits, GTF3C1, GTF3C2, GTF3C3, GTF3C4, GTF3C5 and GTF3C6. Interacts with IGHMBP2. Interacts with MAF1.

Its subcellular location is the nucleus. Functionally, required for RNA polymerase III-mediated transcription. Component of TFIIIC that initiates transcription complex assembly on tRNA and is required for transcription of 5S rRNA and other stable nuclear and cytoplasmic RNAs. Binds to the box B promoter element. This Homo sapiens (Human) protein is General transcription factor 3C polypeptide 1 (GTF3C1).